We begin with the raw amino-acid sequence, 598 residues long: Arginine--tRNA ligase (598 aa).

Positions 131 to 141 (ANPTGPMHVGH) match the 'HIGH' region motif. Residues 288-308 (KLPPPKSKKGQPPAQPQPDEE) form a disordered region.

It belongs to the class-I aminoacyl-tRNA synthetase family. Monomer.

It localises to the cytoplasm. It carries out the reaction tRNA(Arg) + L-arginine + ATP = L-arginyl-tRNA(Arg) + AMP + diphosphate. The polypeptide is Arginine--tRNA ligase (Anaeromyxobacter sp. (strain K)).